The following is a 327-amino-acid chain: uncharacterized protein (327 aa).

A helical transmembrane segment spans residues 12–32; that stretch reads LVVVVVAIAIFTLVLLMLWEG. The interval 149-170 is disordered; it reads AFSAVETSEGSDQESEGADEQG. A compositionally biased stretch (acidic residues) spans 157-167; that stretch reads EGSDQESEGAD. Residues 162-227 adopt a coiled-coil conformation; the sequence is ESEGADEQGK…LDEENREVAE (66 aa).

Its subcellular location is the membrane. This is an uncharacterized protein from Encephalitozoon cuniculi (strain GB-M1) (Microsporidian parasite).